We begin with the raw amino-acid sequence, 787 residues long: Protein smoothened (787 aa).

Positions 1-27 (MAAARPARGPELPLLGLLLLLLLGDPG) are cleaved as a signal peptide. At 28–233 (RGAASSGNAT…EAEHQDMHSY (206 aa)) the chain is on the extracellular side. A disordered region spans residues 30 to 60 (AASSGNATGPGPRSAGGSARRSAAVTGPPPP). Residue Asn-35 is glycosylated (N-linked (GlcNAc...) asparagine). Positions 38–53 (GPGPRSAGGSARRSAA) are enriched in low complexity. Cystine bridges form between Cys-64–Cys-178, Cys-70–Cys-134, Cys-78–Cys-127, Cys-118–Cys-154, and Cys-147–Cys-169. The 117-residue stretch at 65 to 181 (GRAAPCEPLR…DRFPEGCTNE (117 aa)) folds into the FZ domain. Asp-95 lines the cholesterol pocket. A glycan (N-linked (GlcNAc...) asparagine) is linked at Asn-188. 2 disulfides stabilise this stretch: Cys-193/Cys-213 and Cys-217/Cys-295. A helical membrane pass occupies residues 234–254 (IAAFGAVTGLCTLFTLATFVA). Over 255-262 (DWRNSNRY) the chain is Cytoplasmic. The chain crosses the membrane as a helical span at residues 263-283 (PAVILFYVNACFFVGSIGWLA). At 284–314 (QFMDGARREIVCRADGTMRLGEPTSNETLSC) the chain is on the extracellular side. Asn-309 carries an N-linked (GlcNAc...) asparagine glycan. Cys-314 and Cys-390 are disulfide-bonded. The helical transmembrane segment at 315–335 (VIIFVIVYYALMAGVVWFVVL) threads the bilayer. Residues 336 to 358 (TYAWHTSFKALGTTYQPLSGKTS) are Cytoplasmic-facing. A helical membrane pass occupies residues 359–379 (YFHLLTWSLPFVLTVAILAVA). The Extracellular segment spans residues 380-402 (QVDGDSVSGICFVGYKNYRYRAG). Residue Tyr-394 coordinates cholesterol. The chain crosses the membrane as a helical span at residues 403–423 (FVLAPIGLVLIVGGYFLIRGV). The Cytoplasmic portion of the chain corresponds to 424–451 (MTLFSIKSNHPGLLSEKAASKINETMLR). Residues 452 to 472 (LGIFGFLAFGFVLITFSCHFY) form a helical membrane-spanning segment. At 473–524 (DFFNQAEWERSFRDYVLCQANVTIGLPTKQPIPDCEIKNRPSLLVEKINLFA) the chain is on the extracellular side. Residues Cys-490 and Cys-507 are joined by a disulfide bond. A helical membrane pass occupies residues 525–545 (MFGTGIAMSTWVWTKATLLIW). The tract at residues 538–569 (TKATLLIWRRTWCRLTGQSDDEPKRIKKSKMI) is interaction with BBS5 and BBS7. Over 546 to 787 (RRTWCRLTGQ…TELMDADSDF (242 aa)) the chain is Cytoplasmic. A phosphoserine mark is found at Ser-556, Ser-574, and Ser-590. A required for interaction with PRKACA region spans residues 570-653 (AKAFSKRHEL…TPVPPEEQAN (84 aa)). The interval 581-593 (QNPGQELSFSMHT) is interaction with DLG5. Position 593 is a phosphothreonine (Thr-593). Ser-595 and Ser-638 each carry phosphoserine. A phosphothreonine mark is found at Thr-640 and Thr-644. Ser-662 is subject to Phosphoserine. The disordered stretch occupies residues 667–704 (KRLGRKKKRRKRKKEVCPLAPPPELHPPAPAPSTIPRL). Residues 668 to 680 (RLGRKKKRRKRKK) are compositionally biased toward basic residues. Positions 685-699 (LAPPPELHPPAPAPS) are enriched in pro residues.

It belongs to the G-protein coupled receptor Fz/Smo family. In terms of assembly, homodimer. Interacts (via C-terminus) with protein kinase A catalytic subunit PRKACA; interacts with free PRKACA subunits and the interaction leads to sequestration of PRKACA at the membrane, preventing PRKACA-mediated phosphorylation of GLI transcription factors. Interacts with ARRB2. Interacts with KIF7. Interacts with BBS5 and BBS7; the interactions are indicative for the association of SMO with the BBsome complex to facilitate ciliary localization of SMO. Interacts with DLG5 and SDCBP. Interacts with GAS8/DRC4. Post-translationally, phosphorylation by GRK kinases is required for interaction with protein kinase A catalytic subunit PRKACA.

It is found in the cell membrane. The protein localises to the cell projection. The protein resides in the cilium. Its function is as follows. G protein-coupled receptor which associates with the patched protein (PTCH) to transduce hedgehog protein signaling. Binding of sonic hedgehog (SHH) to its receptor patched prevents inhibition of smoothened (SMO) by patched. When active, SMO binds to and sequesters protein kinase A catalytic subunit PRKACA at the cell membrane, preventing PRKACA-mediated phosphorylation of GLI transcription factors which releases the GLI proteins from PRKACA-mediated inhibition and allows for transcriptional activation of hedgehog pathway target genes. Required for the accumulation of KIF7, GLI2 and GLI3 in the cilia. Interacts with DLG5 at the ciliary base to induce the accumulation of KIF7 and GLI2 at the ciliary tip for GLI2 activation. The polypeptide is Protein smoothened (SMO) (Homo sapiens (Human)).